A 351-amino-acid polypeptide reads, in one-letter code: Ferrochelatase (351 aa).

Fe cation is bound by residues H221 and E302.

The protein belongs to the ferrochelatase family.

It is found in the cytoplasm. The enzyme catalyses heme b + 2 H(+) = protoporphyrin IX + Fe(2+). Its pathway is porphyrin-containing compound metabolism; protoheme biosynthesis; protoheme from protoporphyrin-IX: step 1/1. Functionally, catalyzes the ferrous insertion into protoporphyrin IX. This is Ferrochelatase from Bradyrhizobium sp. (strain BTAi1 / ATCC BAA-1182).